Consider the following 194-residue polypeptide: Holliday junction branch migration complex subunit RuvA (194 aa).

The interval 1–64 (MIGRLRGVLT…DDSAALYGFL (64 aa)) is domain I. A domain II region spans residues 65–140 (SESERRLFRH…RAADFNNGIS (76 aa)). The tract at residues 140-144 (STSGK) is flexible linker. Positions 145–194 (LNLDTVSEAALALQQLGYKPAEAARMARDAGTESDDVAIVIKKALQTVLR) are domain III.

The protein belongs to the RuvA family. In terms of assembly, homotetramer. Forms an RuvA(8)-RuvB(12)-Holliday junction (HJ) complex. HJ DNA is sandwiched between 2 RuvA tetramers; dsDNA enters through RuvA and exits via RuvB. An RuvB hexamer assembles on each DNA strand where it exits the tetramer. Each RuvB hexamer is contacted by two RuvA subunits (via domain III) on 2 adjacent RuvB subunits; this complex drives branch migration. In the full resolvosome a probable DNA-RuvA(4)-RuvB(12)-RuvC(2) complex forms which resolves the HJ.

The protein resides in the cytoplasm. Its function is as follows. The RuvA-RuvB-RuvC complex processes Holliday junction (HJ) DNA during genetic recombination and DNA repair, while the RuvA-RuvB complex plays an important role in the rescue of blocked DNA replication forks via replication fork reversal (RFR). RuvA specifically binds to HJ cruciform DNA, conferring on it an open structure. The RuvB hexamer acts as an ATP-dependent pump, pulling dsDNA into and through the RuvAB complex. HJ branch migration allows RuvC to scan DNA until it finds its consensus sequence, where it cleaves and resolves the cruciform DNA. This Xylella fastidiosa (strain M23) protein is Holliday junction branch migration complex subunit RuvA.